The primary structure comprises 115 residues: NADH-ubiquinone oxidoreductase chain 3 (115 aa).

3 helical membrane passes run Leu-4–Leu-24, Phe-55–Leu-75, and Thr-87–Leu-107.

This sequence belongs to the complex I subunit 3 family. In terms of assembly, core subunit of respiratory chain NADH dehydrogenase (Complex I) which is composed of 45 different subunits. Interacts with TMEM186. Interacts with TMEM242.

The protein localises to the mitochondrion inner membrane. The enzyme catalyses a ubiquinone + NADH + 5 H(+)(in) = a ubiquinol + NAD(+) + 4 H(+)(out). Functionally, core subunit of the mitochondrial membrane respiratory chain NADH dehydrogenase (Complex I) which catalyzes electron transfer from NADH through the respiratory chain, using ubiquinone as an electron acceptor. Essential for the catalytic activity of complex I. The sequence is that of NADH-ubiquinone oxidoreductase chain 3 from Notiomys edwardsii (Edwards's long-clawed mouse).